The sequence spans 201 residues: Regulator of G-protein signaling 1 (201 aa).

The region spanning 75–191 (SLEKLLVSEE…LKSEIFFRLA (117 aa)) is the RGS domain.

It localises to the cell membrane. The protein resides in the cytoplasm. It is found in the cytosol. In terms of biological role, regulates G protein-coupled receptor signaling cascades, including signaling downstream of the N-formylpeptide chemoattractant receptors and leukotriene receptors. Inhibits B cell chemotaxis. Inhibits signal transduction by increasing the GTPase activity of G protein alpha subunits, thereby driving them into their inactive GDP-bound form. This chain is Regulator of G-protein signaling 1 (rgs1), found in Xenopus laevis (African clawed frog).